Here is a 507-residue protein sequence, read N- to C-terminus: ATP synthase subunit alpha (507 aa).

168-175 (GDRKTGKT) lines the ATP pocket.

It belongs to the ATPase alpha/beta chains family. As to quaternary structure, F-type ATPases have 2 components, CF(1) - the catalytic core - and CF(0) - the membrane proton channel. CF(1) has five subunits: alpha(3), beta(3), gamma(1), delta(1), epsilon(1). CF(0) has three main subunits: a(1), b(2) and c(9-12). The alpha and beta chains form an alternating ring which encloses part of the gamma chain. CF(1) is attached to CF(0) by a central stalk formed by the gamma and epsilon chains, while a peripheral stalk is formed by the delta and b chains.

It is found in the cell inner membrane. It carries out the reaction ATP + H2O + 4 H(+)(in) = ADP + phosphate + 5 H(+)(out). Produces ATP from ADP in the presence of a proton gradient across the membrane. The alpha chain is a regulatory subunit. The sequence is that of ATP synthase subunit alpha from Ehrlichia ruminantium (strain Gardel).